Reading from the N-terminus, the 256-residue chain is Thiazole synthase (256 aa).

Lysine 95 functions as the Schiff-base intermediate with DXP in the catalytic mechanism. Residues glycine 156, 182–183, and 204–205 contribute to the 1-deoxy-D-xylulose 5-phosphate site; these read AG and NT.

The protein belongs to the ThiG family. As to quaternary structure, homotetramer. Forms heterodimers with either ThiH or ThiS.

Its subcellular location is the cytoplasm. The catalysed reaction is [ThiS sulfur-carrier protein]-C-terminal-Gly-aminoethanethioate + 2-iminoacetate + 1-deoxy-D-xylulose 5-phosphate = [ThiS sulfur-carrier protein]-C-terminal Gly-Gly + 2-[(2R,5Z)-2-carboxy-4-methylthiazol-5(2H)-ylidene]ethyl phosphate + 2 H2O + H(+). Its pathway is cofactor biosynthesis; thiamine diphosphate biosynthesis. Catalyzes the rearrangement of 1-deoxy-D-xylulose 5-phosphate (DXP) to produce the thiazole phosphate moiety of thiamine. Sulfur is provided by the thiocarboxylate moiety of the carrier protein ThiS. In vitro, sulfur can be provided by H(2)S. The chain is Thiazole synthase from Escherichia coli O157:H7.